Here is a 161-residue protein sequence, read N- to C-terminus: Small ribosomal subunit protein uS9 (161 aa).

Belongs to the universal ribosomal protein uS9 family.

The polypeptide is Small ribosomal subunit protein uS9 (Bartonella bacilliformis (strain ATCC 35685 / KC583 / Herrer 020/F12,63)).